We begin with the raw amino-acid sequence, 374 residues long: C-X-C chemokine receptor type 5 (374 aa).

The Extracellular segment spans residues 1-57 (MNYPLTLDMGSITYNMDDLYKELAFYSNSTEIPLQDSNFCSTVEGPLLTSFKAVFMP). Asn28 carries an N-linked (GlcNAc...) asparagine glycan. The chain crosses the membrane as a helical span at residues 58–78 (VAYSLIFLLGMMGNILVLVIL). Residues 79-90 (ERHRHTRSSTET) are Cytoplasmic-facing. A helical membrane pass occupies residues 91 to 111 (FLFHLAVADLLLVFILPFAVA). The Extracellular portion of the chain corresponds to 112-126 (EGSVGWVLGTFLCKT). A disulfide bridge connects residues Cys124 and Cys204. Residues 127–147 (VIALHKINFYCSSLLLACIAV) form a helical membrane-spanning segment. The Cytoplasmic segment spans residues 148–169 (DRYLAIVHAVHAYRRRRLLSIH). Residues 170 to 190 (ITCTAIWLAGFLFALPELLFA) form a helical membrane-spanning segment. Topologically, residues 191-221 (KVGQPHNNDSLPQCTFSQENEAETRAWFTSR) are extracellular. Asn198 carries N-linked (GlcNAc...) asparagine glycosylation. A helical membrane pass occupies residues 222–242 (FLYHIGGFLLPMLVMGWCYVG). Residues 243-261 (VVHRLLQAQRRPQRQKAVR) lie on the Cytoplasmic side of the membrane. A helical transmembrane segment spans residues 262-282 (VAILVTSIFFLCWSPYHIVIF). Residues 283–306 (LDTLERLKAVNSSCELSGYLSVAI) are Extracellular-facing. Residues 307 to 327 (TLCEFLGLAHCCLNPMLYTFA) traverse the membrane as a helical segment. Over 328–374 (GVKFRSDLSRLLTKLGCAGPASLCQLFPNWRKSSLSESENATSLTTF) the chain is Cytoplasmic.

It belongs to the G-protein coupled receptor 1 family. Mainly in spleen, in resting B-cells.

The protein resides in the cell membrane. In terms of biological role, cytokine receptor that binds to B-lymphocyte chemoattractant (BLC). Involved in B-cell migration into B-cell follicles of spleen and Peyer patches but not into those of mesenteric or peripheral lymph nodes. This Mus musculus (Mouse) protein is C-X-C chemokine receptor type 5 (Cxcr5).